We begin with the raw amino-acid sequence, 230 residues long: Ribosomal RNA small subunit methyltransferase G (230 aa).

Residues G80, F85, 131–132 (VE), and R145 each bind S-adenosyl-L-methionine.

Belongs to the methyltransferase superfamily. RNA methyltransferase RsmG family.

It is found in the cytoplasm. It catalyses the reaction guanosine(527) in 16S rRNA + S-adenosyl-L-methionine = N(7)-methylguanosine(527) in 16S rRNA + S-adenosyl-L-homocysteine. In terms of biological role, specifically methylates the N7 position of guanine in position 527 of 16S rRNA. The polypeptide is Ribosomal RNA small subunit methyltransferase G (Novosphingobium aromaticivorans (strain ATCC 700278 / DSM 12444 / CCUG 56034 / CIP 105152 / NBRC 16084 / F199)).